A 469-amino-acid chain; its full sequence is 3-isopropylmalate dehydratase large subunit (469 aa).

Residues C347, C407, and C410 each contribute to the [4Fe-4S] cluster site.

Belongs to the aconitase/IPM isomerase family. LeuC type 1 subfamily. Heterodimer of LeuC and LeuD. It depends on [4Fe-4S] cluster as a cofactor.

It catalyses the reaction (2R,3S)-3-isopropylmalate = (2S)-2-isopropylmalate. The protein operates within amino-acid biosynthesis; L-leucine biosynthesis; L-leucine from 3-methyl-2-oxobutanoate: step 2/4. Its function is as follows. Catalyzes the isomerization between 2-isopropylmalate and 3-isopropylmalate, via the formation of 2-isopropylmaleate. The polypeptide is 3-isopropylmalate dehydratase large subunit (Prochlorococcus marinus (strain NATL1A)).